Consider the following 502-residue polypeptide: DnaJ homolog subfamily C member 3 homolog (502 aa).

Positions 1–25 (MIVNKKYFLLICIIILISINCLVLA) are cleaved as a signal peptide. TPR repeat units lie at residues 29–62 (IENF…IGSD), 69–102 (VSLL…NPDN), 103–136 (IHAR…RPDN), 184–217 (KEVR…EPSS), 218–251 (VAAL…DPDN), 264–297 (FEKS…EPNS), 302–335 (TPLY…DELN), and 336–369 (ADAL…KPND). Residue N51 is glycosylated (N-linked (GlcNAc...) asparagine). The cysteines at positions 309 and 325 are disulfide-linked. Residues 390–457 (DYYKILGIQK…EKRKRYDMGE (68 aa)) enclose the J domain.

The protein resides in the secreted. It localises to the endoplasmic reticulum lumen. In terms of biological role, may be involved in the unfolded protein response (UPR) during ER stress. The chain is DnaJ homolog subfamily C member 3 homolog (dnajc3) from Dictyostelium discoideum (Social amoeba).